The chain runs to 199 residues: Holliday junction branch migration complex subunit RuvA (199 aa).

A domain I region spans residues 1-65 (MIGWLHGQII…EDALLLYGFL (65 aa)). A domain II region spans residues 66 to 144 (DKEERSLFRS…QFDGSVSDTF (79 aa)). Positions 144 to 148 (FQKQA) are flexible linker. Residues 149–199 (GSTHSQQEAISALEALGYKPQEAWKVVNKIDNGNKSCEQLIREALQILSSR) form a domain III region.

It belongs to the RuvA family. Homotetramer. Forms an RuvA(8)-RuvB(12)-Holliday junction (HJ) complex. HJ DNA is sandwiched between 2 RuvA tetramers; dsDNA enters through RuvA and exits via RuvB. An RuvB hexamer assembles on each DNA strand where it exits the tetramer. Each RuvB hexamer is contacted by two RuvA subunits (via domain III) on 2 adjacent RuvB subunits; this complex drives branch migration. In the full resolvosome a probable DNA-RuvA(4)-RuvB(12)-RuvC(2) complex forms which resolves the HJ.

The protein localises to the cytoplasm. In terms of biological role, the RuvA-RuvB-RuvC complex processes Holliday junction (HJ) DNA during genetic recombination and DNA repair, while the RuvA-RuvB complex plays an important role in the rescue of blocked DNA replication forks via replication fork reversal (RFR). RuvA specifically binds to HJ cruciform DNA, conferring on it an open structure. The RuvB hexamer acts as an ATP-dependent pump, pulling dsDNA into and through the RuvAB complex. HJ branch migration allows RuvC to scan DNA until it finds its consensus sequence, where it cleaves and resolves the cruciform DNA. The chain is Holliday junction branch migration complex subunit RuvA from Legionella pneumophila (strain Paris).